Here is a 496-residue protein sequence, read N- to C-terminus: uncharacterized protein (496 aa).

12 helical membrane-spanning segments follow: residues phenylalanine 33–alanine 53, leucine 89–isoleucine 109, proline 127–phenylalanine 147, valine 154–phenylalanine 174, leucine 193–valine 213, isoleucine 247–phenylalanine 267, leucine 285–tyrosine 305, leucine 320–phenylalanine 340, leucine 355–phenylalanine 375, serine 382–phenylalanine 402, leucine 411–phenylalanine 431, and valine 455–isoleucine 475.

Its subcellular location is the cell membrane. This is an uncharacterized protein from Ureaplasma parvum serovar 3 (strain ATCC 700970).